We begin with the raw amino-acid sequence, 314 residues long: Basic endochitinase (314 aa).

The signal sequence occupies residues 1–20; sequence MGLWALVAFCLLSLILVGSA. Positions 21-61 constitute a Chitin-binding type-1 domain; that stretch reads EQCGGQAGGRVCPGGACCSKFGWCGNTADYCGSGCQSQCSS. 7 cysteine pairs are disulfide-bonded: Cys-23–Cys-38, Cys-32–Cys-44, Cys-37–Cys-51, Cys-55–Cys-59, Cys-86–Cys-148, Cys-160–Cys-168, and Cys-267–Cys-299. Glu-130 functions as the Proton donor in the catalytic mechanism.

Belongs to the glycosyl hydrolase 19 family. Chitinase class I subfamily.

It carries out the reaction Random endo-hydrolysis of N-acetyl-beta-D-glucosaminide (1-&gt;4)-beta-linkages in chitin and chitodextrins.. In terms of biological role, defense against chitin-containing fungal pathogens. The protein is Basic endochitinase (CHIT1B) of Vitis vinifera (Grape).